Here is a 303-residue protein sequence, read N- to C-terminus: Mevalonate kinase (303 aa).

Position 90 to 100 (90 to 100 (PAGSGLGSSAA)) interacts with ATP. D141 acts as the Proton acceptor in catalysis.

The protein belongs to the GHMP kinase family. Mevalonate kinase subfamily. Homodimer. It depends on Mg(2+) as a cofactor.

It localises to the cytoplasm. It carries out the reaction (R)-mevalonate + ATP = (R)-5-phosphomevalonate + ADP + H(+). It functions in the pathway isoprenoid biosynthesis; isopentenyl diphosphate biosynthesis via mevalonate pathway; isopentenyl diphosphate from (R)-mevalonate: step 1/3. Catalyzes the phosphorylation of (R)-mevalonate (MVA) to (R)-mevalonate 5-phosphate (MVAP). Functions in the mevalonate (MVA) pathway leading to isopentenyl diphosphate (IPP), a key precursor for the biosynthesis of isoprenoid compounds such as archaeal membrane lipids. The polypeptide is Mevalonate kinase (Methanothermobacter thermautotrophicus (strain ATCC 29096 / DSM 1053 / JCM 10044 / NBRC 100330 / Delta H) (Methanobacterium thermoautotrophicum)).